Here is a 578-residue protein sequence, read N- to C-terminus: Proline--tRNA ligase (578 aa).

The protein belongs to the class-II aminoacyl-tRNA synthetase family. ProS type 1 subfamily. In terms of assembly, homodimer.

It localises to the cytoplasm. It carries out the reaction tRNA(Pro) + L-proline + ATP = L-prolyl-tRNA(Pro) + AMP + diphosphate. Catalyzes the attachment of proline to tRNA(Pro) in a two-step reaction: proline is first activated by ATP to form Pro-AMP and then transferred to the acceptor end of tRNA(Pro). As ProRS can inadvertently accommodate and process non-cognate amino acids such as alanine and cysteine, to avoid such errors it has two additional distinct editing activities against alanine. One activity is designated as 'pretransfer' editing and involves the tRNA(Pro)-independent hydrolysis of activated Ala-AMP. The other activity is designated 'posttransfer' editing and involves deacylation of mischarged Ala-tRNA(Pro). The misacylated Cys-tRNA(Pro) is not edited by ProRS. The protein is Proline--tRNA ligase of Paraburkholderia xenovorans (strain LB400).